We begin with the raw amino-acid sequence, 467 residues long: 3-isopropylmalate dehydratase large subunit (467 aa).

[4Fe-4S] cluster contacts are provided by cysteine 348, cysteine 409, and cysteine 412. The segment at 423–448 is disordered; the sequence is NERSISTSNRNFEGRQGKGSRTHLAS.

Belongs to the aconitase/IPM isomerase family. LeuC type 1 subfamily. In terms of assembly, heterodimer of LeuC and LeuD. [4Fe-4S] cluster is required as a cofactor.

The enzyme catalyses (2R,3S)-3-isopropylmalate = (2S)-2-isopropylmalate. It participates in amino-acid biosynthesis; L-leucine biosynthesis; L-leucine from 3-methyl-2-oxobutanoate: step 2/4. Its function is as follows. Catalyzes the isomerization between 2-isopropylmalate and 3-isopropylmalate, via the formation of 2-isopropylmaleate. The protein is 3-isopropylmalate dehydratase large subunit of Bifidobacterium longum (strain DJO10A).